A 315-amino-acid chain; its full sequence is Ribosomal RNA small subunit methyltransferase H (315 aa).

S-adenosyl-L-methionine contacts are provided by residues 37-39 (GGH), D57, F83, D105, and Q112.

The protein belongs to the methyltransferase superfamily. RsmH family.

The protein resides in the cytoplasm. The enzyme catalyses cytidine(1402) in 16S rRNA + S-adenosyl-L-methionine = N(4)-methylcytidine(1402) in 16S rRNA + S-adenosyl-L-homocysteine + H(+). In terms of biological role, specifically methylates the N4 position of cytidine in position 1402 (C1402) of 16S rRNA. The chain is Ribosomal RNA small subunit methyltransferase H from Pseudomonas putida (strain W619).